Reading from the N-terminus, the 377-residue chain is MLKRASFVEVNSASLRHNFSAVKSIVPKDAHIMAVVKANAYGAGAIKASEIFLQEGANYLGVAALDEALELRSHFPKTPILILGYSPNANASMLIDNDLSAMVFSLEQAEVFSQMALKSQKRLKVHLKIDTGMHRLGLEPNFKSIETIKKIRALKGLEIEGIFTHLSNADAKIKTHAKNQMKAFNAFLEQLLDQKIEFQYRHAYNSAGILSLCNGNENRLLNLYRPGIMLYGFYPSNGMKESCPTILKNVISLKAQIVQIRSVKKGEFIGYGEHFYTNEETLVGVLALGYADGLMRALGNRIQVAINNQLAPLIGKVCMDQCFVKLNDIQAKEGDEVILFGDKSARANDASEIAALLNTIAYETISTLSKRLERVYI.

Lys37 serves as the catalytic Proton acceptor; specific for D-alanine. Lys37 is modified (N6-(pyridoxal phosphate)lysine). Arg135 is a substrate binding site. Residue Tyr271 is the Proton acceptor; specific for L-alanine of the active site. Met319 contributes to the substrate binding site.

It belongs to the alanine racemase family. Pyridoxal 5'-phosphate serves as cofactor.

It carries out the reaction L-alanine = D-alanine. Its pathway is amino-acid biosynthesis; D-alanine biosynthesis; D-alanine from L-alanine: step 1/1. Functionally, catalyzes the interconversion of L-alanine and D-alanine. May also act on other amino acids. This Helicobacter pylori (strain HPAG1) protein is Alanine racemase (alr).